Here is a 183-residue protein sequence, read N- to C-terminus: Gamma-crystallin N-A (183 aa).

Beta/gamma crystallin 'Greek key' domains lie at 6 to 46 (GKIV…RVES), 47 to 89 (GAWV…KPIK), 95 to 136 (YRME…KVYG), and 138 to 180 (GAWA…RRVV).

It belongs to the beta/gamma-crystallin family. In terms of assembly, monomer.

Crystallins are the dominant structural components of the vertebrate eye lens. This Danio rerio (Zebrafish) protein is Gamma-crystallin N-A (crygna).